The chain runs to 342 residues: Galactose mutarotase (342 aa).

S14 is subject to Phosphoserine. Residues 81–82, H107, 176–178, D243, Q279, and E307 each bind beta-D-galactose; these read NR and HSY. H176 (proton donor) is an active-site residue. The Proton acceptor role is filled by E307.

This sequence belongs to the aldose epimerase family. As to quaternary structure, monomer.

The protein localises to the cytoplasm. It catalyses the reaction alpha-D-galactose = beta-D-galactose. The enzyme catalyses alpha-D-glucose = beta-D-glucose. It participates in carbohydrate metabolism; hexose metabolism. Its pathway is carbohydrate metabolism; galactose metabolism. In terms of biological role, mutarotase that catalyzes the interconversion of beta-D-galactose and alpha-D-galactose during galactose metabolism. Beta-D-galactose is metabolized in the liver into glucose 1-phosphate, the primary metabolic fuel, by the action of four enzymes that constitute the Leloir pathway: GALM, GALK1 (galactokinase), GALT (galactose-1-phosphate uridylyltransferase) and GALE (UDP-galactose-4'-epimerase). Involved in the maintenance of the equilibrium between the beta- and alpha-anomers of galactose, therefore ensuring a sufficient supply of the alpha-anomer for GALK1. Also active on D-glucose although shows a preference for galactose over glucose. This Mus musculus (Mouse) protein is Galactose mutarotase.